We begin with the raw amino-acid sequence, 182 residues long: ATP-dependent protease subunit HslV (182 aa).

The active site involves T6. Na(+) is bound by residues A164, C167, and T170.

The protein belongs to the peptidase T1B family. HslV subfamily. As to quaternary structure, a double ring-shaped homohexamer of HslV is capped on each side by a ring-shaped HslU homohexamer. The assembly of the HslU/HslV complex is dependent on binding of ATP.

It localises to the cytoplasm. It catalyses the reaction ATP-dependent cleavage of peptide bonds with broad specificity.. Allosterically activated by HslU binding. In terms of biological role, protease subunit of a proteasome-like degradation complex believed to be a general protein degrading machinery. The polypeptide is ATP-dependent protease subunit HslV (Borreliella burgdorferi (strain ATCC 35210 / DSM 4680 / CIP 102532 / B31) (Borrelia burgdorferi)).